Consider the following 674-residue polypeptide: Tripartite terminase subunit 3 (674 aa).

The Walker A motif motif lies at 212 to 219 (VPRRHGKT). The short motif at 305 to 310 (LLLVDE) is the Walker B motif element. The active-site For ATPase activity is the Glu-310. Residues Asp-463, Glu-534, and Asp-651 each act as for nuclease activity in the active site.

It belongs to the herpesviridae TRM3 protein family. As to quaternary structure, interacts with the terminase subunits TRM1 and TRM2. Interacts with portal protein.

It localises to the host nucleus. In terms of biological role, component of the molecular motor that translocates viral genomic DNA in empty capsid during DNA packaging. Forms a tripartite terminase complex together with TRM1 and TRM2 in the host cytoplasm. Once the complex reaches the host nucleus, it interacts with the capsid portal vertex. This portal forms a ring in which genomic DNA is translocated into the capsid. TRM3 carries an RNase H-like nuclease activity that plays an important role for the cleavage of concatemeric viral DNA into unit length genomes. This is Tripartite terminase subunit 3 from Homo sapiens (Human).